The primary structure comprises 150 residues: Viral late gene transcription factor 2 (150 aa).

Belongs to the orthopoxvirus VLTF-2/OPG126 family. Interacts with itself. Interacts with the late transcription factors VLTF-1/OPG093.

Functionally, acts with RNA polymerase to initiate transcription from late gene promoters. The polypeptide is Viral late gene transcription factor 2 (OPG126) (Vaccinia virus (strain Western Reserve) (VACV)).